A 463-amino-acid chain; its full sequence is tRNA (guanine(10)-N(2))-methyltransferase TRMT11 (463 aa).

Alanine 2 carries the N-acetylalanine modification.

This sequence belongs to the class I-like SAM-binding methyltransferase superfamily. TRM11 methyltransferase family. In terms of assembly, part of the heterodimeric TRMT11-TRM112 methyltransferase complex; this complex forms an active tRNA methyltransferase, where TRMT112 acts as an activator of the catalytic subunit TRMT11.

It localises to the cytoplasm. The catalysed reaction is guanosine(10) in tRNA + S-adenosyl-L-methionine = N(2)-methylguanosine(10) in tRNA + S-adenosyl-L-homocysteine + H(+). In terms of biological role, catalytic subunit of the TRMT11-TRM112 methyltransferase complex, that specifically mediates the S-adenosyl-L-methionine-dependent N(2)-methylation of guanosine nucleotide at position 10 (m2G10) in tRNAs. This is one of the major tRNA (guanine-N(2))-methyltransferases. The protein is tRNA (guanine(10)-N(2))-methyltransferase TRMT11 of Homo sapiens (Human).